A 110-amino-acid chain; its full sequence is Large ribosomal subunit protein uL22 (110 aa).

It belongs to the universal ribosomal protein uL22 family. In terms of assembly, part of the 50S ribosomal subunit.

Functionally, this protein binds specifically to 23S rRNA; its binding is stimulated by other ribosomal proteins, e.g. L4, L17, and L20. It is important during the early stages of 50S assembly. It makes multiple contacts with different domains of the 23S rRNA in the assembled 50S subunit and ribosome. In terms of biological role, the globular domain of the protein is located near the polypeptide exit tunnel on the outside of the subunit, while an extended beta-hairpin is found that lines the wall of the exit tunnel in the center of the 70S ribosome. The chain is Large ribosomal subunit protein uL22 from Nitrosomonas eutropha (strain DSM 101675 / C91 / Nm57).